The chain runs to 92 residues: Subtilisin inhibitor 1 (92 aa).

Residues 1–12 show a composition bias toward polar residues; it reads QEQGTNPSQEQN. Residues 1–31 are disordered; that stretch reads QEQGTNPSQEQNVPLPRNYKQALETNTPTKT.

It belongs to the protease inhibitor I13 (potato type I serine protease inhibitor) family.

Its function is as follows. Inhibitor of subtilisin. The protein is Subtilisin inhibitor 1 of Phaseolus angularis (Azuki bean).